A 319-amino-acid polypeptide reads, in one-letter code: L-tryptophan isonitrile synthase AmbI1 (319 aa).

Belongs to the isocyanide synthase family.

It carries out the reaction D-ribulose 5-phosphate + L-tryptophan = (2S)-3-(1H-indol-3-yl)-2-isocyanopropanoate + hydroxyacetone + formaldehyde + phosphate + H2O + H(+). Its function is as follows. Involved in the biosynthesis of ambiguines, a family of hapalindole-type alkaloids. Responsible for the synthesis of the isonitrile group on tryptophan using ribulose 5-phosphate as the source of the carbon atom. The polypeptide is L-tryptophan isonitrile synthase AmbI1 (Fischerella ambigua (strain UTEX 1903)).